The primary structure comprises 508 residues: GTPase Obg (508 aa).

The region spanning 2-159 is the Obg domain; sequence ARFVDRVVLH…HDVILELKSM (158 aa). In terms of domain architecture, OBG-type G spans 160–341; that stretch reads ADIGLVGFPS…LKYAMLDLVQ (182 aa). GTP contacts are provided by residues 166 to 173, 191 to 195, 212 to 215, 292 to 295, and 322 to 324; these read GFPSAGKS, FTTLQ, DVPG, NKAD, and SAV. The Mg(2+) site is built by serine 173 and threonine 193. The OCT domain occupies 364–444; the sequence is DARKKNKDFE…IGEVSFEWEP (81 aa).

This sequence belongs to the TRAFAC class OBG-HflX-like GTPase superfamily. OBG GTPase family. Monomer. Mg(2+) serves as cofactor.

It is found in the cytoplasm. Functionally, an essential GTPase which binds GTP, GDP and possibly (p)ppGpp with moderate affinity, with high nucleotide exchange rates and a fairly low GTP hydrolysis rate. Plays a role in control of the cell cycle, stress response, ribosome biogenesis and in those bacteria that undergo differentiation, in morphogenesis control. In Corynebacterium diphtheriae (strain ATCC 700971 / NCTC 13129 / Biotype gravis), this protein is GTPase Obg.